The primary structure comprises 166 residues: MPRSQKNDNFIDKTFTVVADILLKVLPTTRNEKEAFVYYRDGMSAQAEGEYAEALQNYAQAMRLEVDPYDRSFIFYNIGLIHTSNGEHTKALEYYYQALDRNPSLPQALNNIAVIYHYRGEQALAAGNIPDSETLFEKAAEYWKEAIRLAPLNYSEAQNWLQTTGR.

TPR repeat units follow at residues 35–68 (AFVY…EVDP), 72–105 (SFIF…NPSL), and 120–153 (GEQA…APLN).

The protein belongs to the Ycf3 family.

It localises to the plastid. Its subcellular location is the chloroplast thylakoid membrane. In terms of biological role, essential for the assembly of the photosystem I (PSI) complex. May act as a chaperone-like factor to guide the assembly of the PSI subunits. This Ostreococcus tauri protein is Photosystem I assembly protein Ycf3.